The primary structure comprises 69 residues: Protein translocase subunit SecE (69 aa).

Residues 43-63 (VAGAGILVIGFVGFLIYVLLT) form a helical membrane-spanning segment.

The protein belongs to the SecE/SEC61-gamma family. Component of the Sec protein translocase complex. Heterotrimer consisting of SecY (alpha), SecG (beta) and SecE (gamma) subunits. The heterotrimers can form oligomers, although 1 heterotrimer is thought to be able to translocate proteins. Interacts with the ribosome. May interact with SecDF, and other proteins may be involved.

Its subcellular location is the cell membrane. Its function is as follows. Essential subunit of the Sec protein translocation channel SecYEG. Clamps together the 2 halves of SecY. May contact the channel plug during translocation. This is Protein translocase subunit SecE from Methanococcoides burtonii (strain DSM 6242 / NBRC 107633 / OCM 468 / ACE-M).